The chain runs to 321 residues: Probable arabinan endo-1,5-alpha-L-arabinosidase C (321 aa).

An N-terminal signal peptide occupies residues 1-20; sequence MYLYTLILLFLASVNVNAYA. The Proton acceptor role is filled by D33. 2 N-linked (GlcNAc...) asparagine glycosylation sites follow: N75 and N192. E200 functions as the Proton donor in the catalytic mechanism. N-linked (GlcNAc...) asparagine glycosylation occurs at N224.

Belongs to the glycosyl hydrolase 43 family.

It localises to the secreted. It catalyses the reaction Endohydrolysis of (1-&gt;5)-alpha-arabinofuranosidic linkages in (1-&gt;5)-arabinans.. The protein operates within glycan metabolism; L-arabinan degradation. In terms of biological role, endo-1,5-alpha-L-arabinanase involved in degradation of pectin. Its preferred substrate is linear 1,5-alpha-L-arabinan. The protein is Probable arabinan endo-1,5-alpha-L-arabinosidase C (abnC) of Neosartorya fischeri (strain ATCC 1020 / DSM 3700 / CBS 544.65 / FGSC A1164 / JCM 1740 / NRRL 181 / WB 181) (Aspergillus fischerianus).